Consider the following 517-residue polypeptide: MIESLIALIAAIVGLGIGYLVAKKINDAKYEIFVEQAKAKAKAIEYEAELILKDAKNSILNAELEVKKKYEEKTHKFQKDFNQKFDDLSKKEQKLQQEEEKLKEDKEYLCKSQKHIQNLQSDVDKLKNKYQEKLDDVLKILEHSTGLTQNEAKEIILKKVEENSREQIAHIVRKYEEEAKNEAKRKANFIIAQATSRFAGEFAAERLINVINIKNDELKGRIIGKEGRNVKTLEMVLGVDIIIDDTPGAIIVSCFNLYRRAIATKVIELLVEDGRIQPARIEEIHEKVCKEFDSAILEEGETIVMDLGLNKIHPEIVKLIGKLKYRASYGQNALAHSLEVAHLAGIIAAECGGDENLARRAGILHDIGKALTHDFEGSHVDLGAELCKRYKEHPVVINAIYAHHGHEEATSIESAAVCAADTLSAARPGARREVLEAFLKRVSELEDIAKSKEGIKNAYAINAGREIRVIANAQLVNDDESVLLAKEIAAEIQEKMQYPGEIKVNVIRELRAVEYAK.

Residues 1 to 21 (MIESLIALIAAIVGLGIGYLV) form a helical membrane-spanning segment. The region spanning 207–273 (LINVINIKND…TKVIELLVED (67 aa)) is the KH domain. In terms of domain architecture, HD spans 333-426 (ALAHSLEVAH…VCAADTLSAA (94 aa)).

Belongs to the RNase Y family.

The protein localises to the cell membrane. Endoribonuclease that initiates mRNA decay. This is Ribonuclease Y from Campylobacter jejuni subsp. jejuni serotype O:2 (strain ATCC 700819 / NCTC 11168).